A 193-amino-acid chain; its full sequence is MARNANITRETKETKIEVFLDIDRKGEIKISTPVPFFNHMLITLLTYMNSTATVSATDKLPYDDHHIIEDVAITLGLAIKEALGDKRGIKRFSHQIIPMDEALVLVSLDISNRGMAFVSLNLRRSEIGGLATENIPHFFQSFAYNSGVTLHISQLSGYNTHHIIEASFKALGLALYEATRIVDNEIRSTKGVI.

The protein belongs to the imidazoleglycerol-phosphate dehydratase family.

Its subcellular location is the cytoplasm. The enzyme catalyses D-erythro-1-(imidazol-4-yl)glycerol 3-phosphate = 3-(imidazol-4-yl)-2-oxopropyl phosphate + H2O. It participates in amino-acid biosynthesis; L-histidine biosynthesis; L-histidine from 5-phospho-alpha-D-ribose 1-diphosphate: step 6/9. This Saccharolobus islandicus (strain Y.G.57.14 / Yellowstone #1) (Sulfolobus islandicus) protein is Imidazoleglycerol-phosphate dehydratase.